The following is a 248-amino-acid chain: MIVLVTGATAGFGECITRRFIQQGHKVIATGRRQERLQELKDELGDNLYIAQLDVRNRAAIEEMLASLPAEWCNIDILVNNAGLALGMEPAHKASIEDWETMIDTNNKGLVYMTRAVLPGMVERNHGHIINIGSTAGSWPYAGGNVYGATKAFVRQFSLNLRTDLHGTAVRVTDIEPGLVGGTEFSNVRFKGDDGKAEKTYQNTVALTPEDVSEAVWWVSTLPAHVNINTLEMMPVTQSYAGLNVHRQ.

Residues 7–12 (GATAGF), 32–33 (RR), 54–55 (DV), and N81 each bind NADP(+). Residue S134 coordinates substrate. Residues Y147, K151, and 177-185 (PGLVGGTEF) each bind NADP(+). The active-site Proton acceptor is Y147.

This sequence belongs to the short-chain dehydrogenases/reductases (SDR) family. Homotetramer.

It carries out the reaction 3-hydroxypropanoate + NADP(+) = 3-oxopropanoate + NADPH + H(+). It catalyses the reaction L-allo-threonine + NADP(+) = aminoacetone + CO2 + NADPH. NADP-dependent dehydrogenase with broad substrate specificity acting on 3-hydroxy acids. Catalyzes the NADP-dependent oxidation of L-allo-threonine to L-2-amino-3-keto-butyrate, which is spontaneously decarboxylated into aminoacetone. Also acts on D-threonine, L-serine, D-serine, D-3-hydroxyisobutyrate, L-3-hydroxyisobutyrate, D-glycerate and L-glycerate. Able to catalyze the reduction of the malonic semialdehyde to 3-hydroxypropionic acid. YdfG is apparently supplementing RutE, the presumed malonic semialdehyde reductase involved in pyrimidine degradation since both are able to detoxify malonic semialdehyde. This Escherichia coli O157:H7 protein is NADP-dependent 3-hydroxy acid dehydrogenase YdfG.